The following is a 911-amino-acid chain: MAYQGSGSHSPPHYDDNGHRLQDLPHGSYEEEASRGLLSHQQGPFTGPFDDPQQHGSSTTRPVSGYSLSETYAPEAAYHDPYTQPSPGSVYSAQSAENPAAAFGVPGRVASPYARSDTSSTEAWRQRQAPGGGPGGLRRYATRKVKLVQGSVLSVDYPVPSAIQNAIQAKYRNDLEGGSEEFTHMRYTAATCDPNEFTLHNGYNLRPAMYNRHTELLIAITYYNEDKTLTSRTLHGVMQNIRDIVNLKKSEFWNKGGPAWQKIVVCLVFDGIDPCDKDTLDVLATIGVYQDGVMKRDVDGKETVAHIFEYTTQLSVTPNQQLIRPTDDGPSTLPPVQMMFCLKQKNSKKINSHRWLFNAFGRILNPEVCILLDAGTKPGPKSLLSLWEAFYNDKDLGGACGEIHAMLGKGWKNLINPLVAAQNFEYKISNILDKPLESSFGYVSVLPGAFSAYRFRAIMGRPLEQYFHGDHTLSKQLGKKGIEGMNIFKKNMFLAEDRILCFELVAKAGSKWHLTYVKASKAETDVPEGAPEFISQRRRWLNGSFAAGIYSLMHFGRMYKSGHNIVRMFFLHIQMLYNIFSTVLTWFSLASYWLTTTVIMDLVGTPSDNNGNKAFPFGKTATPIINTIVKYVYLGFLLLQFILALGNRPKGSKFSYLASFVVFGIIQVYVVIDALYLVVRAFSGSAPMDFTTDQGVGEFLKSFFSSSGAGIIIIALAATFGLYFVASFMYLDPWHMFTSFPAYMCVQSSYINILNVYAFSNWHDVSWGTKGSDKADALPSAKTTKDEGKEVVIEEIDKPQADIDSQFEATVKRALTPYVPPVEKEEKTLEDSYKSFRTRLVTFWIFSNAFLAVCITSDGVDKFGFTNSATDRTQRFFQALLWSNAVVALFRFIGACWFLGKTGLMCCFARR.

Disordered regions lie at residues 1 to 66 (MAYQ…VSGY) and 107 to 138 (GRVA…GGLR). Positions 12-34 (PHYDDNGHRLQDLPHGSYEEEAS) are enriched in basic and acidic residues. Over residues 54-66 (QHGSSTTRPVSGY) the composition is skewed to polar residues. 6 helical membrane-spanning segments follow: residues 579-599 (IFST…TTVI), 624-644 (IINT…FILA), 659-679 (SFVV…YLVV), 711-731 (IIII…FMYL), 840-860 (LVTF…SDGV), and 879-899 (ALLW…CWFL).

The protein belongs to the chitin synthase family. Class III subfamily.

The protein localises to the cell membrane. It catalyses the reaction [(1-&gt;4)-N-acetyl-beta-D-glucosaminyl](n) + UDP-N-acetyl-alpha-D-glucosamine = [(1-&gt;4)-N-acetyl-beta-D-glucosaminyl](n+1) + UDP + H(+). Functionally, polymerizes chitin, a structural polymer of the cell wall and septum, by transferring the sugar moiety of UDP-GlcNAc to the non-reducing end of the growing chitin polymer. In Aspergillus fumigatus (strain ATCC MYA-4609 / CBS 101355 / FGSC A1100 / Af293) (Neosartorya fumigata), this protein is Chitin synthase G (chsG).